The chain runs to 497 residues: Latent membrane protein 2 (497 aa).

The tract at residues Met-1–Ser-108 is disordered. The Cytoplasmic portion of the chain corresponds to Met-1 to Val-123. Residues Asn-27–Thr-41 show a composition bias toward polar residues. The PPxY motif motif lies at Pro-97–Tyr-101. Tyr-112 is subject to Phosphotyrosine; by host. Residues Cys-124–Phe-144 form a helical membrane-spanning segment. Residues Thr-145–Ser-147 are Extracellular-facing. The chain crosses the membrane as a helical span at residues Val-148–Ala-168. Over Ser-169–Lys-177 the chain is Cytoplasmic. A helical transmembrane segment spans residues Leu-178 to Trp-198. Residues Arg-199 to Ala-211 lie on the Extracellular side of the membrane. Residues Leu-212–Ile-232 form a helical membrane-spanning segment. The Cytoplasmic portion of the chain corresponds to Leu-233–Arg-241. The helical transmembrane segment at Leu-242–Val-262 threads the bilayer. Residues Leu-263–Pro-267 are Extracellular-facing. The helical transmembrane segment at Leu-268 to Leu-288 threads the bilayer. Residues Ser-289–Thr-296 lie on the Cytoplasmic side of the membrane. A helical membrane pass occupies residues Leu-297 to Gly-317. Thr-318 is a topological domain (extracellular). A helical transmembrane segment spans residues Leu-319 to Cys-339. Residues Ser-340–Arg-354 lie on the Cytoplasmic side of the membrane. Residues Leu-355–Ile-375 traverse the membrane as a helical segment. Residues Leu-376 to Phe-388 are Extracellular-facing. Residues Ile-389 to Ile-409 form a helical membrane-spanning segment. Residues Leu-410–Pro-422 lie on the Cytoplasmic side of the membrane. Residues Val-423 to Met-443 traverse the membrane as a helical segment. The Extracellular segment spans residues Ser-444–Ser-449. A helical transmembrane segment spans residues Ala-450 to Ile-470. Topologically, residues Arg-471–Val-497 are cytoplasmic.

Belongs to the herpesviridae LMP-2 family. As to quaternary structure, the cytoplasmic N-terminal domain interacts with human SRC family protein tyrosine kinases SYK and LYN. Binds human ITCH, WWP2 and NEDD4L. Phosphorylated on cytoplasmic N-terminal tyrosine residues, possibly by human LYN. Post-translationally, can be ubiquitinated by human ITCH and WWP2 on the N-terminus in a lysine-independent manner.

The protein resides in the host cell membrane. It is found in the host endomembrane system. The protein localises to the host cytoplasm. It localises to the host perinuclear region. Its function is as follows. Maintains EBV latent infection of B-lymphocyte, by preventing lytic reactivation of the virus in response to surface immunoglobulin (sIg) cross-linking. Acts like a dominant negative inhibitor of the sIg-associated protein tyrosine kinases, LYN and SYK. Also blocks translocation of the B-cell antigen receptor (BCR) into lipid rafts, preventing the subsequent signaling and accelerated internalization of the BCR upon BCR cross-linking. Serves as a molecular scaffold to recruit SYK, LYN and E3 protein-ubiquitin ligases, such as ITCH and NEDD4L, leading to ubiquitination and potential degradation of both tyrosines kinases. Possesses a constitutive signaling activity in non-transformed cells, inducing bypass of normal B lymphocyte developmental checkpoints allowing immunoglobulin-negative cells to colonize peripheral lymphoid organs. May be a negative regulator of isoform LMP2A. The sequence is that of Latent membrane protein 2 (LMP2) from Epstein-Barr virus (strain B95-8) (HHV-4).